Here is a 361-residue protein sequence, read N- to C-terminus: Chorismate synthase (361 aa).

NADP(+) is bound by residues arginine 48 and arginine 54. Residues 125–127, 238–239, glycine 278, 293–297, and arginine 319 contribute to the FMN site; these read RSS, NA, and KPTSS.

This sequence belongs to the chorismate synthase family. Homotetramer. Requires FMNH2 as cofactor.

It catalyses the reaction 5-O-(1-carboxyvinyl)-3-phosphoshikimate = chorismate + phosphate. Its pathway is metabolic intermediate biosynthesis; chorismate biosynthesis; chorismate from D-erythrose 4-phosphate and phosphoenolpyruvate: step 7/7. Catalyzes the anti-1,4-elimination of the C-3 phosphate and the C-6 proR hydrogen from 5-enolpyruvylshikimate-3-phosphate (EPSP) to yield chorismate, which is the branch point compound that serves as the starting substrate for the three terminal pathways of aromatic amino acid biosynthesis. This reaction introduces a second double bond into the aromatic ring system. In Yersinia pseudotuberculosis serotype O:1b (strain IP 31758), this protein is Chorismate synthase.